A 121-amino-acid polypeptide reads, in one-letter code: Large ribosomal subunit protein uL14 (121 aa).

The protein belongs to the universal ribosomal protein uL14 family. As to quaternary structure, part of the 50S ribosomal subunit. Forms a cluster with proteins L3 and L19. In the 70S ribosome, L14 and L19 interact and together make contacts with the 16S rRNA in bridges B5 and B8.

Its function is as follows. Binds to 23S rRNA. Forms part of two intersubunit bridges in the 70S ribosome. The polypeptide is Large ribosomal subunit protein uL14 (Akkermansia muciniphila (strain ATCC BAA-835 / DSM 22959 / JCM 33894 / BCRC 81048 / CCUG 64013 / CIP 107961 / Muc)).